A 150-amino-acid polypeptide reads, in one-letter code: Transcription antitermination protein NusB (150 aa).

Belongs to the NusB family.

Involved in transcription antitermination. Required for transcription of ribosomal RNA (rRNA) genes. Binds specifically to the boxA antiterminator sequence of the ribosomal RNA (rrn) operons. This chain is Transcription antitermination protein NusB, found in Chloroflexus aggregans (strain MD-66 / DSM 9485).